The chain runs to 311 residues: Ribosomal RNA small subunit methyltransferase H (311 aa).

Residues 32–34, D52, F79, D100, and Q107 contribute to the S-adenosyl-L-methionine site; that span reads AGH.

It belongs to the methyltransferase superfamily. RsmH family.

The protein resides in the cytoplasm. It carries out the reaction cytidine(1402) in 16S rRNA + S-adenosyl-L-methionine = N(4)-methylcytidine(1402) in 16S rRNA + S-adenosyl-L-homocysteine + H(+). Functionally, specifically methylates the N4 position of cytidine in position 1402 (C1402) of 16S rRNA. The sequence is that of Ribosomal RNA small subunit methyltransferase H from Staphylococcus carnosus (strain TM300).